Here is a 69-residue protein sequence, read N- to C-terminus: uncharacterized protein (69 aa).

Transmembrane regions (helical) follow at residues 15–35 (LIIG…ICYV) and 36–56 (LYII…IPKT).

It is found in the cell membrane. This is an uncharacterized protein from Methanocaldococcus jannaschii (strain ATCC 43067 / DSM 2661 / JAL-1 / JCM 10045 / NBRC 100440) (Methanococcus jannaschii).